A 315-amino-acid polypeptide reads, in one-letter code: Olfactory receptor 5M1 (315 aa).

At 1 to 25 the chain is on the extracellular side; it reads MFSPNHTIVTEFILLGLTDDPVLEK. Asn5 carries N-linked (GlcNAc...) asparagine glycosylation. A helical membrane pass occupies residues 26–46; sequence ILFGVFLAIYLITLAGNLCMI. Residues 47–54 lie on the Cytoplasmic side of the membrane; that stretch reads LLIRTNSH. Residues 55 to 75 traverse the membrane as a helical segment; that stretch reads LQTPMYFFLGHLSFVDICYSS. Residues 76–99 lie on the Extracellular side of the membrane; it reads NVTPNMLHNFLSEQKTISYAGCFT. An intrachain disulfide couples Cys97 to Cys189. The chain crosses the membrane as a helical span at residues 100–120; that stretch reads QCLLFIALVITEFYILASMAL. Over 121–139 the chain is Cytoplasmic; sequence DRYVAICSPLHYSSRMSKN. A helical membrane pass occupies residues 140–160; the sequence is ICVCLVTIPYMYGFLSGFSQS. At 161 to 196 the chain is on the extracellular side; sequence LLTFHLSFCGSLEINHFYCADPPLIMLACSDTRVKK. Residues 197–217 form a helical membrane-spanning segment; the sequence is MAMFVVAGFNLSSSLFIILLS. At 218-237 the chain is on the cytoplasmic side; it reads YLFIFAAIFRIRSAEGRHKA. The helical transmembrane segment at 238–258 threads the bilayer; sequence FSTCASHLTIVTLFYGTLFCM. Residues 259-271 are Extracellular-facing; that stretch reads YVRPPSEKSVEES. The chain crosses the membrane as a helical span at residues 272-292; sequence KITAVFYTFLSPMLNPLIYSL. The Cytoplasmic portion of the chain corresponds to 293-315; it reads RNTDVILAMQQMIRGKSFHKIAV.

It belongs to the G-protein coupled receptor 1 family.

It is found in the cell membrane. In terms of biological role, odorant receptor. This Homo sapiens (Human) protein is Olfactory receptor 5M1 (OR5M1).